An 827-amino-acid polypeptide reads, in one-letter code: Periplasmic nitrate reductase (827 aa).

The segment at residues Met-1–Ala-33 is a signal peptide (tat-type signal). A 4Fe-4S Mo/W bis-MGD-type domain is found at Ile-37–Asp-93. 4 residues coordinate [4Fe-4S] cluster: Cys-44, Cys-47, Cys-51, and Cys-79. Mo-bis(molybdopterin guanine dinucleotide) contacts are provided by residues Lys-81, Gln-148, Asn-173, Cys-177, Trp-210–Met-217, Ser-241–His-245, Gln-260–Asp-262, Met-370, Gln-374, Asn-480, Ser-506–Asp-507, Lys-529, Asp-556, and Thr-716–Thr-725. Phe-792 serves as a coordination point for substrate. Positions 800 and 817 each coordinate Mo-bis(molybdopterin guanine dinucleotide).

Belongs to the prokaryotic molybdopterin-containing oxidoreductase family. NasA/NapA/NarB subfamily. Component of the periplasmic nitrate reductase NapAB complex composed of NapA and NapB. The cofactor is [4Fe-4S] cluster. Mo-bis(molybdopterin guanine dinucleotide) is required as a cofactor. Post-translationally, predicted to be exported by the Tat system. The position of the signal peptide cleavage has not been experimentally proven.

It localises to the periplasm. It carries out the reaction 2 Fe(II)-[cytochrome] + nitrate + 2 H(+) = 2 Fe(III)-[cytochrome] + nitrite + H2O. Functionally, catalytic subunit of the periplasmic nitrate reductase complex NapAB. Receives electrons from NapB and catalyzes the reduction of nitrate to nitrite. In Haemophilus influenzae (strain PittEE), this protein is Periplasmic nitrate reductase.